Here is a 241-residue protein sequence, read N- to C-terminus: Sugar fermentation stimulation protein homolog (241 aa).

The protein belongs to the SfsA family.

In Trichormus variabilis (strain ATCC 29413 / PCC 7937) (Anabaena variabilis), this protein is Sugar fermentation stimulation protein homolog.